Reading from the N-terminus, the 320-residue chain is Stress-involved WYL domain-containing regulator (320 aa).

Residues 7-65 form the HTH deoR-type domain; sequence TTGRVVQLLGLLQSRRVWTGEELAERLGVTGRSVRRDIERLRELGYPVHASKGQGGGYQ. Positions 24 to 43 form a DNA-binding region, H-T-H motif; it reads WTGEELAERLGVTGRSVRRD. In terms of domain architecture, WYL spans 139-218; it reads DTAVAPDVLM…SDVRATGTTF (80 aa). The WCX domain stretch occupies residues 245-320; it reads VRYFAPEKVV…MADRLRRAVR (76 aa).

As to quaternary structure, homodimer.

Its function is as follows. Transcriptional activator. Acts as a transcriptional activator of the MSMEG_1357-56 operon upon genotoxic stress. Controls adjacent genes that belong to the DinB/YfiT-like putative metalloenzymes superfamily by upregulating their expression in response to various genotoxic stress conditions, including exposure to H(2)O(2) or the natural antibiotic zeocin, as well as mitomycin C (MMC), diamide and UVC radiation. Upon genotoxic stress, upregulates two genes encoding proteins of the DinB/YfiT-like putative metalloenzymes superfamily, MSMEG_1357 and MSMEG_1356. Binds different forms of single-stranded DNA (ssDNA) with high affinity, primarily through its characteristic WYL domain. Binds nucleic acids with single-stranded regions, such as polyT 20mer ssDNA, 5' tailed, 3' tailed and fork DNA, but not ssRNA. The chain is Stress-involved WYL domain-containing regulator from Mycolicibacterium smegmatis (strain ATCC 700084 / mc(2)155) (Mycobacterium smegmatis).